A 170-amino-acid chain; its full sequence is MAQIRIHEVNTRIENEVEVSKFLQEEGVLYEKWNISKLPPHLNENYSLTDENKAEILAVFSKEIADVSVRRGYKAHDVISLSNSTPNLDELLINFQKEHHHTDDEVRFIVSGHGIFAIEGKDGTFFDVELEPGDLISVPENARHYFTLQDDRQVVAIRIFVTTEGWVPIY.

Positions 99, 101, 105, and 144 each coordinate Fe(2+). 4 residues coordinate Ni(2+): H99, H101, E105, and H144.

Belongs to the acireductone dioxygenase (ARD) family. As to quaternary structure, monomer. Requires Fe(2+) as cofactor. It depends on Ni(2+) as a cofactor.

It carries out the reaction 1,2-dihydroxy-5-(methylsulfanyl)pent-1-en-3-one + O2 = 3-(methylsulfanyl)propanoate + CO + formate + 2 H(+). The enzyme catalyses 1,2-dihydroxy-5-(methylsulfanyl)pent-1-en-3-one + O2 = 4-methylsulfanyl-2-oxobutanoate + formate + 2 H(+). It participates in amino-acid biosynthesis; L-methionine biosynthesis via salvage pathway; L-methionine from S-methyl-5-thio-alpha-D-ribose 1-phosphate: step 5/6. Its function is as follows. Catalyzes 2 different reactions between oxygen and the acireductone 1,2-dihydroxy-3-keto-5-methylthiopentene (DHK-MTPene) depending upon the metal bound in the active site. Fe-containing acireductone dioxygenase (Fe-ARD) produces formate and 2-keto-4-methylthiobutyrate (KMTB), the alpha-ketoacid precursor of methionine in the methionine recycle pathway. Ni-containing acireductone dioxygenase (Ni-ARD) produces methylthiopropionate, carbon monoxide and formate, and does not lie on the methionine recycle pathway. This Bacillus thuringiensis (strain Al Hakam) protein is Acireductone dioxygenase.